The chain runs to 134 residues: METNKLYECTLIIDGGLQDEAIAAAMALVQRVITEKGGSISSVLEIGRRKTAYPIKKKTIGYYAHIEFTAATSVIAEVEKVIRYEEDLLRYLIIHLTSALLEMRKRVEKYSVVIGSPEDSALAEAAAASDTVAK.

The protein belongs to the bacterial ribosomal protein bS6 family.

Binds together with bS18 to 16S ribosomal RNA. This is Small ribosomal subunit protein bS6 from Pelodictyon phaeoclathratiforme (strain DSM 5477 / BU-1).